We begin with the raw amino-acid sequence, 732 residues long: Catalase-peroxidase (732 aa).

The segment at residues 96-219 is a cross-link (tryptophyl-tyrosyl-methioninium (Trp-Tyr) (with M-245)); the sequence is WHSAGTYRIG…LGAVQMGLIY (124 aa). Histidine 97 functions as the Proton acceptor in the catalytic mechanism. Positions 219–245 form a cross-link, tryptophyl-tyrosyl-methioninium (Tyr-Met) (with W-96); that stretch reads YVNPEGPNGHPDPVASGRDIRETFGRM. Heme b is bound at residue histidine 260.

The protein belongs to the peroxidase family. Peroxidase/catalase subfamily. As to quaternary structure, homodimer or homotetramer. Heme b is required as a cofactor. Post-translationally, formation of the three residue Trp-Tyr-Met cross-link is important for the catalase, but not the peroxidase activity of the enzyme.

The catalysed reaction is H2O2 + AH2 = A + 2 H2O. The enzyme catalyses 2 H2O2 = O2 + 2 H2O. Its function is as follows. Bifunctional enzyme with both catalase and broad-spectrum peroxidase activity. The protein is Catalase-peroxidase of Acaryochloris marina (strain MBIC 11017).